The chain runs to 191 residues: Putative endogenous retrovirus group K member 11-1 Env polyprotein (191 aa).

Residues 1-191 (MPGAIDDHCP…DITLHPQGLV (191 aa)) form a truncated surface protein region.

The protein belongs to the beta type-B retroviral envelope protein family. HERV class-II K(HML-8) env subfamily. Cerebellum and testis.

The protein resides in the virion. Retroviral envelope proteins mediate receptor recognition and membrane fusion during early infection. Endogenous envelope proteins may have kept, lost or modified their original function during evolution. This chain is Putative endogenous retrovirus group K member 11-1 Env polyprotein (ERVK11-1), found in Homo sapiens (Human).